The following is a 161-amino-acid chain: 3-isopropylmalate dehydratase small subunit (161 aa).

It belongs to the LeuD family. LeuD type 2 subfamily. Heterodimer of LeuC and LeuD.

It catalyses the reaction (2R,3S)-3-isopropylmalate = (2S)-2-isopropylmalate. Its pathway is amino-acid biosynthesis; L-leucine biosynthesis; L-leucine from 3-methyl-2-oxobutanoate: step 2/4. Its function is as follows. Catalyzes the isomerization between 2-isopropylmalate and 3-isopropylmalate, via the formation of 2-isopropylmaleate. The chain is 3-isopropylmalate dehydratase small subunit from Sulfolobus acidocaldarius (strain ATCC 33909 / DSM 639 / JCM 8929 / NBRC 15157 / NCIMB 11770).